Here is a 777-residue protein sequence, read N- to C-terminus: Serine/threonine-protein kinase PLK4 (777 aa).

A Protein kinase domain is found at 14 to 268 (YEVQHLLGKG…LEQVLRHPFL (255 aa)). Residues 20–28 (LGKGGFASV) and lysine 43 each bind ATP. Residue aspartate 139 is the Proton acceptor of the active site. Over residues 371–381 (TNNLAPFTSDS) the composition is skewed to polar residues. Positions 371-390 (TNNLAPFTSDSDMIPSPVGE) are disordered. In terms of domain architecture, Cryptic POLO box 1 (CPB1) spans 390–507 (EKRLLMPPLE…ARFVGLVKSK (118 aa)). Residues 508-611 (TPKITFFSSL…GRRPAADMHA (104 aa)) form the Cryptic POLO box 2 (CPB2) domain. In terms of domain architecture, POLO box spans 669-748 (PIKRITVPEI…MPQLQMKLKC (80 aa)).

It belongs to the protein kinase superfamily. Ser/Thr protein kinase family. CDC5/Polo subfamily. In terms of assembly, homodimer. Ubiquitinated by the SCF(Slimb) ubiquitin ligase complex; leading to its degradation by the proteasome during interphase and regulating centriole number and ensuring the block to centriole reduplication.

It is found in the cytoplasm. The protein resides in the cytoskeleton. The protein localises to the microtubule organizing center. It localises to the centrosome. Its subcellular location is the centriole. It carries out the reaction L-seryl-[protein] + ATP = O-phospho-L-seryl-[protein] + ADP + H(+). The enzyme catalyses L-threonyl-[protein] + ATP = O-phospho-L-threonyl-[protein] + ADP + H(+). Serine/threonine-protein kinase that plays a central role in centriole duplication. Able to trigger procentriole formation on the surface of the mother centriole cylinder, using mother centriole as a platform, leading to the recruitment of centriole biogenesis proteins such as sas-6. When overexpressed, it is able to induce centrosome amplification through the simultaneous generation of multiple procentrioles adjoining each parental centriole during S phase. Centrosome amplification following overexpression can initiate tumorigenesis, highlighting the importance of centrosome regulation in cancers. The sequence is that of Serine/threonine-protein kinase PLK4 (SAK) from Drosophila pseudoobscura pseudoobscura (Fruit fly).